A 198-amino-acid chain; its full sequence is Protein GrpE (198 aa).

The span at 1–14 (MSNEENKINEEALK) shows a compositional bias: basic and acidic residues. Residues 1-20 (MSNEENKINEEALKQQDAAE) are disordered.

This sequence belongs to the GrpE family. As to quaternary structure, homodimer.

The protein resides in the cytoplasm. Participates actively in the response to hyperosmotic and heat shock by preventing the aggregation of stress-denatured proteins, in association with DnaK and GrpE. It is the nucleotide exchange factor for DnaK and may function as a thermosensor. Unfolded proteins bind initially to DnaJ; upon interaction with the DnaJ-bound protein, DnaK hydrolyzes its bound ATP, resulting in the formation of a stable complex. GrpE releases ADP from DnaK; ATP binding to DnaK triggers the release of the substrate protein, thus completing the reaction cycle. Several rounds of ATP-dependent interactions between DnaJ, DnaK and GrpE are required for fully efficient folding. The protein is Protein GrpE of Vibrio vulnificus (strain YJ016).